The chain runs to 534 residues: Calmodulin calcium-dependent NAD kinase (534 aa).

A calmodulin-binding region spans residues 167–196 (QKVPKLKDFVMAATRKQRFERVTKDLKVKR). Residue 238–245 (GGMGAGKS) participates in ATP binding.

In terms of assembly, interacts with calmodulin (CaM) in a calcium Ca(2+)-dependent manner in vitro. Ca(2+) serves as cofactor.

It localises to the mitochondrion outer membrane. The catalysed reaction is NAD(+) + ATP = ADP + NADP(+) + H(+). In terms of biological role, phosphorylates NAD(+) to produce NADP(+) in a calmodulin calcium-dependent manner. Does not possess activity toward NADH. Has broad specificity for the phosphoryl donor, as ATP, CTP, GTP and UTP can be used interchangeably and produce similar efficiencies. May play a role in producing NADP(H) needed to regulate the elicitor-induced reactive oxygen species (ROS) burst by sustaining the activity of NADPH oxidases. Does not seem to play a role in photosynthesis-driven growth. This chain is Calmodulin calcium-dependent NAD kinase, found in Arabidopsis thaliana (Mouse-ear cress).